The following is a 448-amino-acid chain: Histidinol dehydrogenase (448 aa).

Residues tyrosine 136, glutamine 197, and asparagine 220 each coordinate NAD(+). 3 residues coordinate substrate: serine 243, glutamine 265, and histidine 268. The Zn(2+) site is built by glutamine 265 and histidine 268. Catalysis depends on proton acceptor residues glutamate 333 and histidine 334. Histidine 334, aspartate 367, glutamate 421, and histidine 426 together coordinate substrate. Residue aspartate 367 coordinates Zn(2+). Zn(2+) is bound at residue histidine 426.

It belongs to the histidinol dehydrogenase family. Requires Zn(2+) as cofactor.

It catalyses the reaction L-histidinol + 2 NAD(+) + H2O = L-histidine + 2 NADH + 3 H(+). Its pathway is amino-acid biosynthesis; L-histidine biosynthesis; L-histidine from 5-phospho-alpha-D-ribose 1-diphosphate: step 9/9. In terms of biological role, catalyzes the sequential NAD-dependent oxidations of L-histidinol to L-histidinaldehyde and then to L-histidine. In Pseudomonas syringae pv. syringae (strain B728a), this protein is Histidinol dehydrogenase.